Reading from the N-terminus, the 104-residue chain is Large ribosomal subunit protein bL21c (104 aa).

This sequence belongs to the bacterial ribosomal protein bL21 family. Part of the 50S ribosomal subunit.

Its subcellular location is the plastid. The protein resides in the chloroplast. Functionally, this protein binds to 23S rRNA. This Pyropia yezoensis (Susabi-nori) protein is Large ribosomal subunit protein bL21c.